A 68-amino-acid polypeptide reads, in one-letter code: Metallothionein-3 (68 aa).

At methionine 1 the chain carries N-acetylmethionine. Positions 1-30 (MDPETCPCPTGGSCTCSDPCKCEGCTCASS) are beta. The a divalent metal cation site is built by cysteine 6, cysteine 8, cysteine 14, cysteine 16, cysteine 20, cysteine 22, cysteine 25, and cysteine 27. The tract at residues 31-68 (KKSCCSCCPAECEKCAKDCVCKGGEGAEAEEKKCSCCQ) is alpha. At serine 33 the chain carries Phosphoserine. Residues cysteine 34, cysteine 35, cysteine 37, cysteine 38, cysteine 42, cysteine 45, cysteine 49, cysteine 51, cysteine 64, cysteine 66, and cysteine 67 each contribute to the a divalent metal cation site.

It belongs to the metallothionein superfamily. Type 1 family.

Its function is as follows. Binds heavy metals. Contains five zinc and one copper atoms per polypeptide chain and only a negligible amount of cadmium. This chain is Metallothionein-3 (MT3), found in Bos mutus grunniens (Wild yak).